Reading from the N-terminus, the 219-residue chain is Multiple organellar RNA editing factor 2, chloroplastic (219 aa).

Residues 1–48 (MALPLSGTRHLTRALLSNVTLMAPPRIPSSVHYGGSRLGCSTRFFSIR) constitute a chloroplast transit peptide. Residues 182–219 (VQRSPERQRRVEPQPQRAQDRPRYNDRTRYSRRRENTR) are disordered. Residues 185–219 (SPERQRRVEPQPQRAQDRPRYNDRTRYSRRRENTR) show a composition bias toward basic and acidic residues.

It belongs to the MORF family. Homodimer and heterodimer with MORF9. Interacts with protoporphyrinogen oxidase 1 PPOX1. Heterodimers with MORF8/RIP1 and MORF9/RIP9. Interacts with PCMP-A2/PMD1. Interacts with ORRM1. Interacts with ORRM6.

It localises to the plastid. The protein localises to the chloroplast. Functionally, involved in plastid rRNA processing and consequently in translation and early chloroplast differentiation. Involved in organellar RNA editing. Required for the processing of multiple editing sites in plastids. The protein is Multiple organellar RNA editing factor 2, chloroplastic of Arabidopsis thaliana (Mouse-ear cress).